We begin with the raw amino-acid sequence, 89 residues long: Elongation factor 1-beta (89 aa).

This sequence belongs to the EF-1-beta/EF-1-delta family.

In terms of biological role, promotes the exchange of GDP for GTP in EF-1-alpha/GDP, thus allowing the regeneration of EF-1-alpha/GTP that could then be used to form the ternary complex EF-1-alpha/GTP/AAtRNA. In Methanococcus maripaludis (strain C6 / ATCC BAA-1332), this protein is Elongation factor 1-beta.